The sequence spans 104 residues: uncharacterized protein (104 aa).

In terms of domain architecture, HIT spans 3–104 (VFEKIIQGEI…HFHILSGDKH (102 aa)). Positions 93–97 (HLHFH) match the Histidine triad motif motif.

This is an uncharacterized protein from Helicobacter pylori (strain J99 / ATCC 700824) (Campylobacter pylori J99).